The chain runs to 156 residues: MIVALKVKRIEMGTVLDHLPPGTAPQIMRILDIDPTETTLLVAINVESSKMGRKDILKIEGKILSEEEANKVALVAPNATVNIVRDYSVAEKFQVKPPERVEGFLRCPNPNCITNDEREPVDTVFVRESKKPLEYRCRYCERTVREDQIRELIRPS.

Positions 107, 112, 137, and 140 each coordinate Zn(2+).

Belongs to the PyrI family. As to quaternary structure, contains catalytic and regulatory chains. Zn(2+) serves as cofactor.

Involved in allosteric regulation of aspartate carbamoyltransferase. The sequence is that of Aspartate carbamoyltransferase regulatory chain from Methanopyrus kandleri (strain AV19 / DSM 6324 / JCM 9639 / NBRC 100938).